An 877-amino-acid polypeptide reads, in one-letter code: GTPase activating protein homolog 2 (877 aa).

The region spanning 14-285 (FKFTDNLWDG…SVEMIDITND (272 aa)) is the F-BAR domain. Residues 130–214 (QEGIKLKQDM…SNCDEEYREQ (85 aa)) adopt a coiled-coil conformation. One can recognise a Rho-GAP domain in the interval 374 to 560 (VSLDELMNRQ…TLIKQIPPPL (187 aa)). Disordered regions lie at residues 589–612 (DQLS…GSGS), 644–704 (LPPL…AEPT), and 749–800 (AATP…LAST). Composition is skewed to low complexity over residues 593-612 (NDDN…GSGS), 653-676 (SGSG…SPTT), and 749-779 (AATP…STST). A compositionally biased stretch (polar residues) spans 780–800 (IKTSSPDRTTPLTSSPPLAST).

The protein localises to the cytoplasm. Its subcellular location is the contractile vacuole. Functionally, rho GTPase-activating protein involved in the signal transduction pathway. Regulator of the contractile vacuole network as well as involved in driving vacuole emptying. This is GTPase activating protein homolog 2 (mgp2) from Dictyostelium discoideum (Social amoeba).